An 86-amino-acid polypeptide reads, in one-letter code: Probable weak neurotoxin NNAM1 (86 aa).

The first 21 residues, Met1–Thr21, serve as a signal peptide directing secretion. 5 cysteine pairs are disulfide-bonded: Cys24–Cys45, Cys27–Cys32, Cys38–Cys63, Cys67–Cys78, and Cys79–Cys84.

This sequence belongs to the three-finger toxin family. Ancestral subfamily. Orphan group II sub-subfamily. In terms of tissue distribution, expressed by the venom gland.

The protein resides in the secreted. In terms of biological role, binds with low affinity to muscular (alpha-1-beta-1-delta-epsilon/CHRNA1-CHRNB1-CHRND-CHRNE) and very low affinity to neuronal (alpha-7/CHRNA7) nicotinic acetylcholine receptor (nAChR). This Naja atra (Chinese cobra) protein is Probable weak neurotoxin NNAM1.